Consider the following 505-residue polypeptide: E3 SUMO-protein ligase PIAS4-A (505 aa).

One can recognise an SAP domain in the interval 12–46 (VKSFRVSDLQTLLASMGRSKSGLKQDLVGRALRLV). The LXXLL motif signature appears at 20–24 (LQTLL). Lys35 is covalently cross-linked (Glycyl lysine isopeptide (Lys-Gly) (interchain with G-Cter in SUMO); alternate). A Glycyl lysine isopeptide (Lys-Gly) (interchain with G-Cter in SUMO2); alternate cross-link involves residue Lys35. Residues Lys56 and Lys68 each participate in a glycyl lysine isopeptide (Lys-Gly) (interchain with G-Cter in SUMO2) cross-link. In terms of domain architecture, PINIT spans 104–264 (GIPKPAPPPA…SVAVYLVRVF (161 aa)). Residues 296 to 381 (PESEIATTGL…LKETPEDVEE (86 aa)) form an SP-RING-type zinc finger. Residues Cys327, His329, Cys350, and Cys353 each coordinate Zn(2+). Positions 374-505 (ETPEDVEEIE…DYDKDLVTAY (132 aa)) are required for nuclear localization. A compositionally biased stretch (basic and acidic residues) spans 395-407 (DDKEKERERENSR). The disordered stretch occupies residues 395–505 (DDKEKERERE…DYDKDLVTAY (111 aa)). The segment covering 437-457 (SGSGGASAGTGSTSGGSGGGT) has biased composition (gly residues). Over residues 462–485 (TLDDSSEEEGGGGAEDSEETDDSQ) the composition is skewed to acidic residues. The span at 493–505 (GRYDYDKDLVTAY) shows a compositional bias: basic and acidic residues.

Belongs to the PIAS family. Sumoylated. Lys-35 is the main site of sumoylation. As to expression, highly expressed in spleen, liver, and brain. Expressed at lower levels in heart, intestine, kidney, gill, skin, and muscle.

It localises to the nucleus. The enzyme catalyses S-ubiquitinyl-[E2 ubiquitin-conjugating enzyme]-L-cysteine + [acceptor protein]-L-lysine = [E2 ubiquitin-conjugating enzyme]-L-cysteine + N(6)-ubiquitinyl-[acceptor protein]-L-lysine.. It functions in the pathway protein modification; protein sumoylation. In terms of biological role, functions as an E3-type small ubiquitin-like modifier (SUMO) ligase. May play a role as a transcriptional coregulator in various cellular pathways. Catalyzes conjugation of SUMO2 to KAT5 in response to DNA damage, facilitating repair of DNA double-strand breaks (DSBs) via homologous recombination (HR). Mediates sumoylation of PARP1 in response to PARP1 trapping to chromatin. Negatively regulates induction of interferon phi 1 (ifnphi1) mediated by mavs and ticam1/trif. Also inhibits ifnphi1-mediated activation of the interferon-stimulated genes (ISGs) pkz and cd40, and to a lesser extent rsad2 and isg15. May inhibit ticam1/trif-mediated activation of NF-kappa-B. The polypeptide is E3 SUMO-protein ligase PIAS4-A (Danio rerio (Zebrafish)).